The primary structure comprises 318 residues: Polyprenal reductase (318 aa).

Topologically, residues 1-11 are cytoplasmic; that stretch reads MAPWAEAEHSA. A helical membrane pass occupies residues 12 to 34; the sequence is LNPLRAVWLTLTAAFLLTLLLQL. Topologically, residues 35-80 are lumenal; it reads LPPGLLPGCAIFQDLIRYGKTKCGEPSRPAACRAFDVPKRYFSHFY. Residues 81-101 traverse the membrane as a helical segment; it reads IISVLWNGFLLWCLTQSLFLG. Residues 102 to 117 are Cytoplasmic-facing; that stretch reads APFPSWLHGLLRILGA. A helical membrane pass occupies residues 118 to 138; it reads AQFQGGELALSAFLVLVFLWL. Topologically, residues 139 to 157 are lumenal; it reads HSLRRLFECLYVSVFSNVM. Residues 158 to 178 form a helical membrane-spanning segment; the sequence is IHVVQYCFGLVYYVLVGLTVL. The Cytoplasmic portion of the chain corresponds to 179 to 194; it reads SQVPMDGRNAYITGKN. A helical membrane pass occupies residues 195–215; it reads LLMQARWFHILGMMMFIWSSA. Over 216-260 the chain is Lumenal; the sequence is HQYKCHVILGNLRKNKAGVVIHCNHRIPFGDWFEYVSSPNYLAEL. Residues 261 to 281 traverse the membrane as a helical segment; that stretch reads MIYVSMAVTFGFHNLTWWLVV. Topologically, residues 282–318 are cytoplasmic; it reads TNVFFNQALSAFLSHQFYKSKFVSYPKHRKAFLPFLF.

It belongs to the steroid 5-alpha reductase family. Polyprenal reductase subfamily. In terms of tissue distribution, expressed in preadipocytes (at protein level). Overexpressed in hormone-refractory prostate cancers (HRPC). Almost no or little expression in normal adult organs.

It is found in the endoplasmic reticulum membrane. The enzyme catalyses a di-trans,poly-cis-dolichal + NADP(+) = a di-trans,poly-cis-polyprenal + NADPH + H(+). The catalysed reaction is a 3-oxo-5alpha-steroid + NADP(+) = a 3-oxo-Delta(4)-steroid + NADPH + H(+). It catalyses the reaction androst-4-ene-3,17-dione + NADPH + H(+) = 5alpha-androstan-3,17-dione + NADP(+). It carries out the reaction 17beta-hydroxy-5alpha-androstan-3-one + NADP(+) = testosterone + NADPH + H(+). It functions in the pathway protein modification; protein glycosylation. Plays a key role in early steps of protein N-linked glycosylation by being involved in the conversion of polyprenol into dolichol. Acts as a polyprenal reductase that mediates the reduction of polyprenal into dolichal in a NADP-dependent mechanism. Dolichols are required for the synthesis of dolichol-linked monosaccharides and the oligosaccharide precursor used for N-glycosylation. Also able to convert testosterone (T) into 5-alpha-dihydrotestosterone (DHT). This chain is Polyprenal reductase, found in Homo sapiens (Human).